The chain runs to 107 residues: U1-lycotoxin-Ls1b (107 aa).

The N-terminal stretch at M1 to S20 is a signal peptide. Positions E21–R41 are excised as a propeptide. 4 cysteine pairs are disulfide-bonded: C44–C59, C51–C68, C58–C86, and C70–C84.

Belongs to the neurotoxin 19 (CSTX) family. 04 (U1-Lctx) subfamily. In terms of tissue distribution, expressed by the venom gland.

The protein resides in the secreted. The polypeptide is U1-lycotoxin-Ls1b (Lycosa singoriensis (Wolf spider)).